A 94-amino-acid chain; its full sequence is Integration host factor subunit beta (94 aa).

It belongs to the bacterial histone-like protein family. Heterodimer of an alpha and a beta chain.

In terms of biological role, this protein is one of the two subunits of integration host factor, a specific DNA-binding protein that functions in genetic recombination as well as in transcriptional and translational control. This Brucella abortus (strain S19) protein is Integration host factor subunit beta.